The chain runs to 375 residues: Queuine tRNA-ribosyltransferase (375 aa).

Residue Asp89 is the Proton acceptor of the active site. Residues 89–93 (DSGGF), Asp143, Gln187, and Gly214 contribute to the substrate site. The RNA binding stretch occupies residues 245-251 (GVGKPED). Residue Asp264 is the Nucleophile of the active site. The interval 269–273 (TRNAR) is RNA binding; important for wobble base 34 recognition. Zn(2+)-binding residues include Cys302, Cys304, Cys307, and His333.

The protein belongs to the queuine tRNA-ribosyltransferase family. In terms of assembly, homodimer. Within each dimer, one monomer is responsible for RNA recognition and catalysis, while the other monomer binds to the replacement base PreQ1. Requires Zn(2+) as cofactor.

It carries out the reaction 7-aminomethyl-7-carbaguanine + guanosine(34) in tRNA = 7-aminomethyl-7-carbaguanosine(34) in tRNA + guanine. It participates in tRNA modification; tRNA-queuosine biosynthesis. Functionally, catalyzes the base-exchange of a guanine (G) residue with the queuine precursor 7-aminomethyl-7-deazaguanine (PreQ1) at position 34 (anticodon wobble position) in tRNAs with GU(N) anticodons (tRNA-Asp, -Asn, -His and -Tyr). Catalysis occurs through a double-displacement mechanism. The nucleophile active site attacks the C1' of nucleotide 34 to detach the guanine base from the RNA, forming a covalent enzyme-RNA intermediate. The proton acceptor active site deprotonates the incoming PreQ1, allowing a nucleophilic attack on the C1' of the ribose to form the product. After dissociation, two additional enzymatic reactions on the tRNA convert PreQ1 to queuine (Q), resulting in the hypermodified nucleoside queuosine (7-(((4,5-cis-dihydroxy-2-cyclopenten-1-yl)amino)methyl)-7-deazaguanosine). In Enterobacter sp. (strain 638), this protein is Queuine tRNA-ribosyltransferase.